We begin with the raw amino-acid sequence, 420 residues long: Serine hydroxymethyltransferase (420 aa).

Residues leucine 121 and 125-127 contribute to the (6S)-5,6,7,8-tetrahydrofolate site; that span reads GHL. Lysine 229 carries the N6-(pyridoxal phosphate)lysine modification.

This sequence belongs to the SHMT family. In terms of assembly, homodimer. The cofactor is pyridoxal 5'-phosphate.

It is found in the cytoplasm. The catalysed reaction is (6R)-5,10-methylene-5,6,7,8-tetrahydrofolate + glycine + H2O = (6S)-5,6,7,8-tetrahydrofolate + L-serine. Its pathway is one-carbon metabolism; tetrahydrofolate interconversion. It participates in amino-acid biosynthesis; glycine biosynthesis; glycine from L-serine: step 1/1. In terms of biological role, catalyzes the reversible interconversion of serine and glycine with tetrahydrofolate (THF) serving as the one-carbon carrier. This reaction serves as the major source of one-carbon groups required for the biosynthesis of purines, thymidylate, methionine, and other important biomolecules. Also exhibits THF-independent aldolase activity toward beta-hydroxyamino acids, producing glycine and aldehydes, via a retro-aldol mechanism. This Aggregatibacter actinomycetemcomitans (Actinobacillus actinomycetemcomitans) protein is Serine hydroxymethyltransferase.